The chain runs to 152 residues: Peptide deformylase (152 aa).

Positions 91 and 133 each coordinate Fe cation. The active site involves E134. Residue H137 coordinates Fe cation.

The protein belongs to the polypeptide deformylase family. Fe(2+) is required as a cofactor.

The enzyme catalyses N-terminal N-formyl-L-methionyl-[peptide] + H2O = N-terminal L-methionyl-[peptide] + formate. Its function is as follows. Removes the formyl group from the N-terminal Met of newly synthesized proteins. Requires at least a dipeptide for an efficient rate of reaction. N-terminal L-methionine is a prerequisite for activity but the enzyme has broad specificity at other positions. The sequence is that of Peptide deformylase from Wigglesworthia glossinidia brevipalpis.